We begin with the raw amino-acid sequence, 146 residues long: Ribonuclease H (146 aa).

The RNase H type-1 domain occupies 1 to 143 (MEKTITIYTD…CDELARLAIK (143 aa)). Mg(2+) contacts are provided by aspartate 10, glutamate 48, aspartate 70, and aspartate 135.

This sequence belongs to the RNase H family. Monomer. The cofactor is Mg(2+).

The protein localises to the cytoplasm. The catalysed reaction is Endonucleolytic cleavage to 5'-phosphomonoester.. Its function is as follows. Endonuclease that specifically degrades the RNA of RNA-DNA hybrids. The chain is Ribonuclease H from Chlorobaculum parvum (strain DSM 263 / NCIMB 8327) (Chlorobium vibrioforme subsp. thiosulfatophilum).